A 265-amino-acid polypeptide reads, in one-letter code: Undecaprenyl-diphosphatase (265 aa).

7 consecutive transmembrane segments (helical) span residues 38–58 (RSDFFNIVIQAGAILAICLAL), 75–95 (RDYVLKVSVAFLVTAVVGLIV), 108–128 (PVAWALLIGGVWMLVAEHVAG), 135–155 (VVTWKVAIAVGLAQVVAGVFP), 181–201 (FVFMVGIPTMFAASGYALLEM), 215–235 (VAVAFVAATITGFVVVKWLLS), and 244–264 (VFAVYRIVLGAALLLWLPAAA).

It belongs to the UppP family.

It localises to the cell inner membrane. It catalyses the reaction di-trans,octa-cis-undecaprenyl diphosphate + H2O = di-trans,octa-cis-undecaprenyl phosphate + phosphate + H(+). In terms of biological role, catalyzes the dephosphorylation of undecaprenyl diphosphate (UPP). Confers resistance to bacitracin. This Xanthomonas oryzae pv. oryzae (strain MAFF 311018) protein is Undecaprenyl-diphosphatase.